The primary structure comprises 385 residues: Trans-enoyl reductase tasC (385 aa).

49–52 serves as a coordination point for NADP(+); the sequence is VDTK. 136–143 contributes to the substrate binding site; the sequence is NSWYTVAW. NADP(+) is bound by residues 196–199, 219–222, and 284–285; these read SSST, SARN, and LD. Position 305 to 309 (305 to 309) interacts with substrate; sequence GPELM. 374–375 is a binding site for NADP(+); that stretch reads VS.

This sequence belongs to the zinc-containing alcohol dehydrogenase family. As to quaternary structure, monomer.

The catalysed reaction is (2S,4S)-4-hydroxy-4-methylglutamate + 8 malonyl-CoA + 3 S-adenosyl-L-methionine + ATP + 8 NADPH + 11 H(+) = (2S)-3-[(2S)-3,5-dioxo-4-[(2E,4R,6R,8E,10E,12E)-4,6,12-trimethyltetradeca-2,8,10,12-tetraenoyl]pyrrolidin-2-yl]-2-hydroxy-2-methylpropanoate + AMP + 3 S-adenosyl-L-homocysteine + 8 CO2 + diphosphate + 8 NADP(+) + 8 CoA + 6 H2O. It catalyses the reaction (2S,4R)-4-hydroxy-4-methylglutamate + 8 malonyl-CoA + 3 S-adenosyl-L-methionine + ATP + 8 NADPH + 11 H(+) = (2R)-3-[(2S)-3,5-dioxo-4-[(2E,4R,6R,8E,10E,12E)-4,6,12-trimethyltetradeca-2,8,10,12-tetraenoyl]pyrrolidin-2-yl]-2-hydroxy-2-methylpropanoate + AMP + 3 S-adenosyl-L-homocysteine + 8 CO2 + diphosphate + 8 NADP(+) + 8 CoA + 6 H2O. It functions in the pathway secondary metabolite biosynthesis. Trans-enoyl reductase; part of the gene cluster that mediates the biosynthesis of the tetramic acids Sch210971 and Sch210972, potential anti-HIV fungal natural product that contain a decalin core. The PKS module of tasS together with the enoylreductase tasC catalyze the formation of the polyketide unit which is then conjugated to 4-hydroxyl-4-methyl glutamate (HMG) by the condensation domain of the tasS NRPS module. One unique structural feature of Sch210971 and Sch210972 is the tetramic acid motif proposed to be derived from the non-proteinogenic amino acid HMG, by a Dieckmann-type condensation catalyzed by the reductase domain of tasS. The aldolase tasA catalyzes the aldol condensation of 2 molecules of pyruvic acid to yield the intermediate 4-hydroxyl-4-methyl-2-oxoglutarate (HMOG), which can then be stereoselectively transaminated, may be by tasG, to form HMG. The Diels-Alderase tas3 then uses the Dieckmann product of tasS as substrate and catalyzes the Diels-Alder cycloaddition to form the decalin ring of Sch210971 and Sch210972. In Hapsidospora irregularis, this protein is Trans-enoyl reductase tasC.